The chain runs to 253 residues: Triosephosphate isomerase (253 aa).

Substrate is bound at residue 9-11 (NWK). Histidine 96 (electrophile) is an active-site residue. The Proton acceptor role is filled by glutamate 169. Substrate is bound by residues glycine 175, serine 215, and 236-237 (GG).

It belongs to the triosephosphate isomerase family. In terms of assembly, homodimer.

The protein resides in the cytoplasm. It carries out the reaction D-glyceraldehyde 3-phosphate = dihydroxyacetone phosphate. It participates in carbohydrate biosynthesis; gluconeogenesis. Its pathway is carbohydrate degradation; glycolysis; D-glyceraldehyde 3-phosphate from glycerone phosphate: step 1/1. Its function is as follows. Involved in the gluconeogenesis. Catalyzes stereospecifically the conversion of dihydroxyacetone phosphate (DHAP) to D-glyceraldehyde-3-phosphate (G3P). The polypeptide is Triosephosphate isomerase (Borreliella burgdorferi (strain ZS7) (Borrelia burgdorferi)).